Here is a 197-residue protein sequence, read N- to C-terminus: Small ribosomal subunit protein uS4 (197 aa).

Residues 87 to 147 (LRLDNVLFRL…EKSKSSARYK (61 aa)) form the S4 RNA-binding domain.

It belongs to the universal ribosomal protein uS4 family. As to quaternary structure, part of the 30S ribosomal subunit. Contacts protein S5. The interaction surface between S4 and S5 is involved in control of translational fidelity.

One of the primary rRNA binding proteins, it binds directly to 16S rRNA where it nucleates assembly of the body of the 30S subunit. Functionally, with S5 and S12 plays an important role in translational accuracy. This Lachnospira eligens (strain ATCC 27750 / DSM 3376 / VPI C15-48 / C15-B4) (Eubacterium eligens) protein is Small ribosomal subunit protein uS4.